The sequence spans 873 residues: Valine--tRNA ligase (873 aa).

The short motif at 46–56 is the 'HIGH' region element; sequence PNVTGKLHIGH. The 'KMSKS' region signature appears at 525–529; that stretch reads KMSKS. Lysine 528 is an ATP binding site. The stretch at 804–873 forms a coiled coil; sequence NDDFIDKEKM…ELIQDKLNKM (70 aa).

Belongs to the class-I aminoacyl-tRNA synthetase family. ValS type 1 subfamily. In terms of assembly, monomer.

It is found in the cytoplasm. It catalyses the reaction tRNA(Val) + L-valine + ATP = L-valyl-tRNA(Val) + AMP + diphosphate. Catalyzes the attachment of valine to tRNA(Val). As ValRS can inadvertently accommodate and process structurally similar amino acids such as threonine, to avoid such errors, it has a 'posttransfer' editing activity that hydrolyzes mischarged Thr-tRNA(Val) in a tRNA-dependent manner. This Mesoplasma florum (strain ATCC 33453 / NBRC 100688 / NCTC 11704 / L1) (Acholeplasma florum) protein is Valine--tRNA ligase.